The primary structure comprises 265 residues: Shikimate dehydrogenase (NADP(+)) (265 aa).

Residues S15 to S17 and T62 contribute to the shikimate site. Residue K66 is the Proton acceptor of the active site. Residues N87 and D102 each contribute to the shikimate site. Residues G125 to A129, N149 to K154, and L209 each bind NADP(+). Residue Y211 participates in shikimate binding. G233 serves as a coordination point for NADP(+).

It belongs to the shikimate dehydrogenase family. In terms of assembly, homodimer.

The enzyme catalyses shikimate + NADP(+) = 3-dehydroshikimate + NADPH + H(+). The protein operates within metabolic intermediate biosynthesis; chorismate biosynthesis; chorismate from D-erythrose 4-phosphate and phosphoenolpyruvate: step 4/7. Functionally, involved in the biosynthesis of the chorismate, which leads to the biosynthesis of aromatic amino acids. Catalyzes the reversible NADPH linked reduction of 3-dehydroshikimate (DHSA) to yield shikimate (SA). The polypeptide is Shikimate dehydrogenase (NADP(+)) (Legionella pneumophila (strain Lens)).